The following is a 300-amino-acid chain: Phospholipase A1 (300 aa).

Residues Cys4 and Cys87 are joined by a disulfide bond. Ser137 acts as the Nucleophile in catalysis. Asp165 functions as the Charge relay system in the catalytic mechanism. Intrachain disulfides connect Cys176-Cys181 and Cys219-Cys227. Residue His229 is the Charge relay system of the active site. Disulfide bonds link Cys244-Cys268, Cys245-Cys293, and Cys261-Cys266.

This sequence belongs to the AB hydrolase superfamily. Lipase family. As to expression, expressed by the venom gland.

The protein localises to the secreted. It carries out the reaction a 1,2-diacyl-sn-glycero-3-phosphocholine + H2O = a 2-acyl-sn-glycero-3-phosphocholine + a fatty acid + H(+). Catalyzes the hydrolysis of phosphatidylcholine with phospholipase A1 activity. May act as an allergen and induce hemolytic activity. In Vespula maculifrons (Eastern yellow jacket), this protein is Phospholipase A1.